Reading from the N-terminus, the 406-residue chain is Sorting nexin-6 (406 aa).

Methionine 1 is subject to N-acetylmethionine. Methionine 2 is subject to N-acetylmethionine; in Sorting nexin-6, N-terminally processed. An interaction with PIM1 region spans residues methionine 2–asparagine 179. The PX domain maps to leucine 26 to leucine 173. A 1,2-diacyl-sn-glycero-3-phospho-(1D-myo-inositol-4,5-bisphosphate) is bound by residues serine 41–lysine 47, phenylalanine 100–lysine 106, and glutamate 114–methionine 117. Serine 116 and serine 194 each carry phosphoserine. A membrane-binding amphipathic helix region spans residues glutamate 182–isoleucine 199. One can recognise a BAR domain in the interval valine 203–threonine 406.

It belongs to the sorting nexin family. Forms heterodimers with BAR domain-containing sorting nexins SNX1 and SNX2. The heterodimers are proposed to self-assemble into helical arrays on the membrane to stabilize and expand local membrane curvature underlying endosomal tubule formation. Thought to be a component of the originally described retromer complex (also called SNX-BAR retromer) which is a pentamer containing the heterotrimeric retromer cargo-selective complex (CSC), also described as vacuolar protein sorting subcomplex (VPS), and a heterodimeric membrane-deforming subcomplex formed between SNX1 or SNX2 and SNX5 or SNX6 (also called SNX-BAR subcomplex); the respective CSC and SNX-BAR subcomplexes associate with low affinity. Interacts with SNX1, SNX2, VPS26A, VPS29, VPS35, TGFB receptors, BACE1, BRMS1, PIP5K1C. Interacts with DCTN1; the association with DCTN1 is involved in movement of retromer-c ontaining vesicles toward the TGN. Interacts with PIM1; translocating SNX6 to the nucleus. Interacts with CDKN1B and GIT1. In terms of processing, in vitro phosphorylated by PIM1; not affecting PIM1-dependent nuclear translocation.

Its subcellular location is the early endosome membrane. The protein resides in the cytoplasmic vesicle. It is found in the cytoplasm. It localises to the nucleus. Its function is as follows. Involved in several stages of intracellular trafficking. Interacts with membranes phosphatidylinositol 3,4-bisphosphate and/or phosphatidylinositol 4,5-bisphosphate. Acts in part as component of the retromer membrane-deforming SNX-BAR subcomplex. The SNX-BAR retromer mediates retrograde transport of cargo proteins from endosomes to the trans-Golgi network (TGN) and is involved in endosome-to-plasma membrane transport for cargo protein recycling. The SNX-BAR subcomplex functions to deform the donor membrane into a tubular profile called endosome-to-TGN transport carrier (ETC). Does not have in vitro vesicle-to-membrane remodeling activity. Involved in retrograde endosome-to-TGN transport of lysosomal enzyme receptor IGF2R. May function as link between transport vesicles and dynactin. Negatively regulates retrograde transport of BACE1 from the cell surface to the trans-Golgi network. Involved in E-cadherin sorting and degradation; inhibits PIP5K1C-mediated E-cadherin degradation. In association with GIT1 involved in EGFR degradation. Promotes lysosomal degradation of CDKN1B. May contribute to transcription regulation. This is Sorting nexin-6 (Snx6) from Mus musculus (Mouse).